The chain runs to 274 residues: Phosphatidylglycerol--prolipoprotein diacylglyceryl transferase (274 aa).

The next 7 helical transmembrane spans lie at 22 to 42 (LSVRWYGLMYLFGFAFAMWLA), 61 to 81 (LLFYGFLGVILGGRVGYVLFY), 96 to 116 (IWTGGMSFHGGLIGVITAMVW), 125 to 145 (FFTVADFVAPLIPFGLGVGRI), 177 to 197 (SQLYQFALEGVVLFIILNLFW), 204 to 224 (GAISGMFLLFYGLFRFLVEFV), and 238 to 258 (ISMGQILSTPMIIIGALMIWV). Arg-144 contributes to the a 1,2-diacyl-sn-glycero-3-phospho-(1'-sn-glycerol) binding site.

The protein belongs to the Lgt family.

The protein resides in the cell inner membrane. It carries out the reaction L-cysteinyl-[prolipoprotein] + a 1,2-diacyl-sn-glycero-3-phospho-(1'-sn-glycerol) = an S-1,2-diacyl-sn-glyceryl-L-cysteinyl-[prolipoprotein] + sn-glycerol 1-phosphate + H(+). It participates in protein modification; lipoprotein biosynthesis (diacylglyceryl transfer). Its function is as follows. Catalyzes the transfer of the diacylglyceryl group from phosphatidylglycerol to the sulfhydryl group of the N-terminal cysteine of a prolipoprotein, the first step in the formation of mature lipoproteins. In Aeromonas hydrophila subsp. hydrophila (strain ATCC 7966 / DSM 30187 / BCRC 13018 / CCUG 14551 / JCM 1027 / KCTC 2358 / NCIMB 9240 / NCTC 8049), this protein is Phosphatidylglycerol--prolipoprotein diacylglyceryl transferase.